Reading from the N-terminus, the 354-residue chain is MASLRKPSNHADRACSRRLRVATRVAGRRMCRPVAATKASTAVTTDMSKRTVPTKLEEGEMPLNTYSNKAPFKAKVRSVEKITGPKATGETCHIIIETEGKIPFWEGQSYGVIPPGTKINSKGKEVPTARLYSIASSRYGDDGDGQTASLCVRRAVYVDPETGKEDPAKKGLCSNFLCDATPGTEISMTGPTGKVLLLPADANAPLICVATGTGIAPFRSFWRRCFIENVPSYKFTGLFWLFMGVGNSDAKLYDEELQAIAKAYPGQFRLDYALSREQNNRKGGKMYIQDKVEEYADEIFDLLDNGAHMYFCGLKGMMPGIQDMLERVAKEKGLNYEEWVEGLKHKNQWHVEVY.

A chloroplast-targeting transit peptide spans 1-35 (MASLRKPSNHADRACSRRLRVATRVAGRRMCRPVA). One can recognise an FAD-binding FR-type domain in the interval 69 to 198 (KAPFKAKVRS…TGPTGKVLLL (130 aa)). 2 positions are modified to N6,N6,N6-trimethyllysine: lysine 118 and lysine 124. FAD contacts are provided by residues 130–133 (RLYS), 151–153 (CVR), and tyrosine 157. The NADP(+) site is built by serine 133 and arginine 153. At lysine 170 the chain carries N6,N6-dimethyllysine. FAD-binding positions include 172 to 174 (LCS) and threonine 213. Residues threonine 213, 245–246 (VG), 275–276 (SR), lysine 285, 313–314 (GL), and glutamate 352 each bind NADP(+).

The protein belongs to the ferredoxin--NADP reductase type 1 family. FAD is required as a cofactor.

Its subcellular location is the plastid. It localises to the chloroplast stroma. The protein resides in the chloroplast thylakoid membrane. It carries out the reaction 2 reduced [2Fe-2S]-[ferredoxin] + NADP(+) + H(+) = 2 oxidized [2Fe-2S]-[ferredoxin] + NADPH. It participates in energy metabolism; photosynthesis. In terms of biological role, may play a key role in regulating the relative amounts of cyclic and non-cyclic electron flow to meet the demands of the plant for ATP and reducing power. The polypeptide is Ferredoxin--NADP reductase, chloroplastic (PETH) (Chlamydomonas reinhardtii (Chlamydomonas smithii)).